The chain runs to 72 residues: DNA-directed RNA polymerase subunit omega (72 aa).

Belongs to the RNA polymerase subunit omega family. The RNAP catalytic core consists of 2 alpha, 1 beta, 1 beta' and 1 omega subunit. When a sigma factor is associated with the core the holoenzyme is formed, which can initiate transcription.

The enzyme catalyses RNA(n) + a ribonucleoside 5'-triphosphate = RNA(n+1) + diphosphate. Its function is as follows. Promotes RNA polymerase assembly. Latches the N- and C-terminal regions of the beta' subunit thereby facilitating its interaction with the beta and alpha subunits. The polypeptide is DNA-directed RNA polymerase subunit omega (Staphylococcus aureus (strain Mu3 / ATCC 700698)).